The sequence spans 707 residues: Solute carrier family 15 member 1 (707 aa).

The helical transmembrane segment at 1–21 (MGMSKSLSCFGYPLSIFFIVV) threads the bilayer. The Extracellular segment spans residues 22–53 (NEFCERFSYYGMRALLILYFRNFIGWDDNLST). Asn-50 carries an N-linked (GlcNAc...) asparagine glycan. A helical membrane pass occupies residues 54-74 (VIYHTFVALCYLTPILGALIA). Residues 75-82 (DAWLGKFK) lie on the Cytoplasmic side of the membrane. A helical transmembrane segment spans residues 83–103 (TIVWLSIVYTIGQAVTSLSSV). At 104–118 (NELTDNNHDGTPDSL) the chain is on the extracellular side. A helical transmembrane segment spans residues 119–139 (PVHVAVCMIGLLLIALGTGGI). The Cytoplasmic segment spans residues 140–161 (KPCVSAFGGDQFEEGQEKQRNR). A helical transmembrane segment spans residues 162–182 (FFSIFYLAINAGSLLSTIITP). The Extracellular portion of the chain corresponds to 183–198 (MVRVQQCGIHVKQACY). The chain crosses the membrane as a helical span at residues 199–219 (PLAFGIPAILMAVSLIVFIIG). Residues 220 to 276 (SGMYKKFKPQGNILSKVVKCICFAIKNRFRHRSKQFPKRAHWLDWAKEKYDERLIAQ) lie on the Cytoplasmic side of the membrane. A helical membrane pass occupies residues 277–297 (IKMVTRVLFLYIPLPMFWALF). Topologically, residues 298–327 (DQQGSRWTLQATTMSGRIGILEIQPDQMQT) are extracellular. The helical transmembrane segment at 328-348 (VNTILIIILVPIMDAVVYPLI) threads the bilayer. The Cytoplasmic portion of the chain corresponds to 349 to 361 (AKCGLNFTSLKKM). A helical transmembrane segment spans residues 362 to 382 (TIGMFLASMAFVAAAILQVEI). At 383–583 (DKTLPVFPKA…PPNTMNMAWQ (201 aa)) the chain is on the extracellular side. The extracellular domain (ECD) stretch occupies residues 383–583 (DKTLPVFPKA…PPNTMNMAWQ (201 aa)). Asn-439, Asn-498, and Asn-513 each carry an N-linked (GlcNAc...) asparagine glycan. Residues 584-604 (IPQYFLITSGEVVFSITGLEF) traverse the membrane as a helical segment. Over 605 to 618 (SYSQAPSNMKSVLQ) the chain is Cytoplasmic. Residues 619-639 (AGWLLTVAVGNIIVLIVAGAG) form a helical membrane-spanning segment. At 640–644 (QINKQ) the chain is on the extracellular side. A helical transmembrane segment spans residues 645–665 (WAEYILFAALLLVVCVIFAIM). The Cytoplasmic portion of the chain corresponds to 666-707 (ARFYTYVNPAEIEAQFEEDEKKKNPEKNDLYPSLAPVSQTQM). The segment at 682-707 (EEDEKKKNPEKNDLYPSLAPVSQTQM) is disordered. Residues 684-694 (DEKKKNPEKND) show a composition bias toward basic and acidic residues.

It belongs to the major facilitator superfamily. Proton-dependent oligopeptide transporter (POT/PTR) (TC 2.A.17) family. Interacts (via extracellular domain region) with trypsin. In terms of tissue distribution, intestine, kidney, liver and low in brain.

It localises to the apical cell membrane. The catalysed reaction is a dipeptide(out) + H(+)(out) = a dipeptide(in) + H(+)(in). It catalyses the reaction an L-amino acid tripeptide(out) + H(+)(out) = an L-amino acid tripeptide(in) + H(+)(in). The enzyme catalyses L-alanyl-L-lysine(out) + H(+)(out) = L-alanyl-L-lysine(in) + H(+)(in). It carries out the reaction L-alanyl-L-proline(out) + H(+)(out) = L-alanyl-L-proline(in) + H(+)(in). The catalysed reaction is L-alanyl-L-valine(out) + H(+)(out) = L-alanyl-L-valine(in) + H(+)(in). It catalyses the reaction carnosine(out) + H(+)(out) = carnosine(in) + H(+)(in). The enzyme catalyses glycyl-L-glutamine(out) + H(+)(out) = glycyl-L-glutamine(in) + H(+)(in). It carries out the reaction glycyl-L-leucine(out) + H(+)(out) = glycyl-L-leucine(in) + H(+)(in). The catalysed reaction is glycyl-L-proline(out) + H(+)(out) = glycyl-L-proline(in) + H(+)(in). It catalyses the reaction glycyl-sarcosine(out) + H(+)(out) = glycyl-sarcosine(in) + H(+)(in). The enzyme catalyses L-leucyl-L-leucine(out) + H(+)(out) = L-leucyl-L-leucine(in) + H(+)(in). It carries out the reaction L-leucyl-L-proline(out) + H(+)(out) = L-leucyl-L-proline(in) + H(+)(in). The catalysed reaction is L-phenylalanyl-L-leucine(out) + H(+)(out) = L-phenylalanyl-L-leucine(in) + H(+)(in). It catalyses the reaction L-phenylalanyl-L-phenylalanine(out) + H(+)(out) = L-phenylalanyl-L-phenylalanine(in) + H(+)(in). The enzyme catalyses L-lysyl-glycine(out) + H(+)(out) = L-lysyl-glycine(in) + H(+)(in). It carries out the reaction L-tyrosylglycine(out) + H(+)(out) = L-tyrosylglycine(in) + H(+)(in). The catalysed reaction is L-alanyl-L-aspartate(out) + 2 H(+)(out) = L-alanyl-L-aspartate(in) + 2 H(+)(in). It catalyses the reaction L-aspartyl-glycine(out) + 2 H(+)(out) = L-aspartyl-glycine(in) + 2 H(+)(in). The enzyme catalyses glycyl-L-aspartate(out) + 2 H(+)(out) = glycyl-L-aspartate(in) + 2 H(+)(in). It carries out the reaction glycyl-L-glutamate(out) + 2 H(+)(out) = glycyl-L-glutamate(in) + 2 H(+)(in). The catalysed reaction is L-alanyl-L-leucyl-L-alanine(out) + H(+)(out) = L-alanyl-L-leucyl-L-alanine(in) + H(+)(in). It catalyses the reaction L-alanyl-L-prolylglycine(out) + H(+)(out) = L-alanyl-L-prolylglycine(in) + H(+)(in). The enzyme catalyses glycylglycyl-L-isoleucine(out) + H(+)(out) = glycylglycyl-L-isoleucine(in) + H(+)(in). It carries out the reaction glycylglycyl-L-proline(out) + H(+)(out) = glycylglycyl-L-proline(in) + H(+)(in). The catalysed reaction is L-methionyl-L-phenylalanyl-L-methionine(out) + H(+)(out) = L-methionyl-L-phenylalanyl-L-methionine(in) + H(+)(in). It catalyses the reaction N-acetyl-D-muramoyl-L-alanyl-D-isoglutamine(out) + 2 H(+)(out) = N-acetyl-D-muramoyl-L-alanyl-D-isoglutamine(in) + 2 H(+)(in). The enzyme catalyses N(alpha)-formyl-L-methionyl-L-leucyl-L-phenylalanine(out) + 2 H(+)(out) = N(alpha)-formyl-L-methionyl-L-leucyl-L-phenylalanine(in) + 2 H(+)(in). Its function is as follows. Electrogenic proton-coupled amino-acid transporter that transports oligopeptides of 2 to 4 amino acids with a preference for dipeptides. Transports neutral and monovalently charged peptides with a proton to peptide stoichiometry of 1:1 or 2:1. Primarily responsible for the absorption of dietary di- and tripeptides from the small intestinal lumen. Mediates transepithelial transport of muramyl and N-formylated bacterial dipeptides contributing to recognition of pathogenic bacteria by the mucosal immune system. The polypeptide is Solute carrier family 15 member 1 (SLC15A1) (Oryctolagus cuniculus (Rabbit)).